The primary structure comprises 345 residues: Dihydroorotate dehydrogenase (quinone) (345 aa).

Residues Ala65–Lys69 and Thr89 contribute to the FMN site. Lys69 contacts substrate. Asn114 to Phe118 is a binding site for substrate. Residues Asn142 and Asn175 each contribute to the FMN site. Asn175 is a binding site for substrate. The active-site Nucleophile is Ser178. Asn180 contributes to the substrate binding site. Lys220 and Thr248 together coordinate FMN. Asn249–Thr250 contributes to the substrate binding site. FMN contacts are provided by residues Gly271, Gly300, and Tyr321 to Thr322.

This sequence belongs to the dihydroorotate dehydrogenase family. Type 2 subfamily. Monomer. It depends on FMN as a cofactor.

The protein localises to the cell membrane. It carries out the reaction (S)-dihydroorotate + a quinone = orotate + a quinol. It functions in the pathway pyrimidine metabolism; UMP biosynthesis via de novo pathway; orotate from (S)-dihydroorotate (quinone route): step 1/1. Catalyzes the conversion of dihydroorotate to orotate with quinone as electron acceptor. This is Dihydroorotate dehydrogenase (quinone) from Burkholderia mallei (strain NCTC 10247).